The following is a 909-amino-acid chain: DNA mismatch repair protein MutS (909 aa).

614–621 (GPNMAGKS) contributes to the ATP binding site. The interval 798–827 (LEENSPQNNDISKESSSSSNSHDKLESSVI) is disordered. Residues 818-827 (SHDKLESSVI) are compositionally biased toward basic and acidic residues.

Belongs to the DNA mismatch repair MutS family.

In terms of biological role, this protein is involved in the repair of mismatches in DNA. It is possible that it carries out the mismatch recognition step. This protein has a weak ATPase activity. This is DNA mismatch repair protein MutS from Clostridium novyi (strain NT).